A 916-amino-acid chain; its full sequence is DNA gyrase subunit A (916 aa).

The Topo IIA-type catalytic domain occupies 42-544; that stretch reads LPDVRDGLKP…FGGDIADEDL (503 aa). Tyr130 (O-(5'-phospho-DNA)-tyrosine intermediate) is an active-site residue. The GyrA-box signature appears at 571–577; it reads QRRGGRG. The segment covering 739-748 has biased composition (acidic residues); the sequence is SDDLEDETAD. Disordered stretches follow at residues 739–774 and 897–916; these read SDDL…RGMR and ESEL…EAEN.

It belongs to the type II topoisomerase GyrA/ParC subunit family. As to quaternary structure, heterotetramer, composed of two GyrA and two GyrB chains. In the heterotetramer, GyrA contains the active site tyrosine that forms a transient covalent intermediate with DNA, while GyrB binds cofactors and catalyzes ATP hydrolysis.

It localises to the cytoplasm. The enzyme catalyses ATP-dependent breakage, passage and rejoining of double-stranded DNA.. In terms of biological role, a type II topoisomerase that negatively supercoils closed circular double-stranded (ds) DNA in an ATP-dependent manner to modulate DNA topology and maintain chromosomes in an underwound state. Negative supercoiling favors strand separation, and DNA replication, transcription, recombination and repair, all of which involve strand separation. Also able to catalyze the interconversion of other topological isomers of dsDNA rings, including catenanes and knotted rings. Type II topoisomerases break and join 2 DNA strands simultaneously in an ATP-dependent manner. In Neisseria gonorrhoeae, this protein is DNA gyrase subunit A.